The primary structure comprises 599 residues: Dehydrogenase eriK (599 aa).

Positions 1 to 20 (MAFLKARLAALLSVAVSCSA) are cleaved as a signal peptide. Residues 43-44 (TA) and 64-65 (EG) each bind FAD. An N-linked (GlcNAc...) asparagine glycan is attached at Asn-93. 122–125 (NGMY) serves as a coordination point for FAD. N-linked (GlcNAc...) asparagine glycans are attached at residues Asn-169, Asn-191, Asn-234, Asn-260, Asn-284, Asn-319, Asn-339, Asn-353, Asn-365, Asn-370, Asn-398, Asn-456, and Asn-518. FAD is bound by residues Ala-569 and 580 to 581 (TQ).

Belongs to the GMC oxidoreductase family. Homodimer. The cofactor is FAD.

Its function is as follows. Dehydrogenase; part of the gene cluster that mediates the biosynthesis of erinacines, cyathane-xylosides that show unique biological activities, including leishmanicidal activity, stimulating activity for nerve growth-factor synthesis, and agonistic activity toward the kappa opioid receptor. The role of the dehydrogenase eriK within the pathway has still to be determined. The first step of the erinacines biosynthesis pathway is catalyzed by the geranylgeranyl diphosphate (GGPP) synthase eriE via conversion of farnesyl pyrophosphate and isopentyl pyrophosphate into geranylgeranyl pyrophosphate (GGPP). GGPP is then substrate of the diterpene cyclase eriG for the production of cyatha-3,12-diene. The cytochrome P450 monooxygenase eriI then hydroxylates cyatha-3,12-diene at C-14 of the seven-membered ring to produce erinacol, which is further hydroxylated at C-15 by the cytochrome P450 monooxygenase eriC to yield cyathadiol. The cytochrome P450 monooxygenase eriA then catalyzes C-11 hydroxylation in the presence of the short chain dehydrogenase/reductase (SDR) eriH, which leads to the production of cyathatriol. The acetyltransferase eriL converts cyathatriol into 11-O-acetyl-cyathatriol. The SDR eriH catalyzes further oxidation of 11-O-acetyl-cyathatriol into 1-O-acetylcyathin A3. Finally, the glycosyl transferase eriJ tranfers xylose from UDP-xylose onto C-14 of 11-O-acetyl-cyathatriol to form eracine Q. EriJ is also able to convert 11-O-acetyl-cyathatriol to eracine Q2 by using UDP-D-glucose as cosubstrate, but at a lower rate. In Hericium erinaceus (Lion's mane mushroom), this protein is Dehydrogenase eriK.